The sequence spans 328 residues: Tryptophan--tRNA ligase (328 aa).

Residues 10 to 12 (QAT) and 18 to 19 (GN) contribute to the ATP site. The short motif at 11–19 (ATGSLHLGN) is the 'HIGH' region element. L-tryptophan is bound at residue Asp-134. ATP contacts are provided by residues 146 to 148 (GED), Ile-186, and 195 to 199 (KMSKS). Residues 195 to 199 (KMSKS) carry the 'KMSKS' region motif.

It belongs to the class-I aminoacyl-tRNA synthetase family. Homodimer.

It is found in the cytoplasm. It catalyses the reaction tRNA(Trp) + L-tryptophan + ATP = L-tryptophyl-tRNA(Trp) + AMP + diphosphate + H(+). Catalyzes the attachment of tryptophan to tRNA(Trp). The sequence is that of Tryptophan--tRNA ligase from Rickettsia bellii (strain RML369-C).